The following is a 341-amino-acid chain: NSRIAHVPKSKKPLNSASPRFHPTHQIIETKPSTLHRQEWGLKSSIPSKVQTRYIIFNDLDTLERLTTFEPNAGSQWSRLRFQELGVAPSYNAGKSNPLFEGSSSSSNQLVPLSSLLNIDPTSSRTDVEKKLSQVKSLRKVFKKWLLSKDPEALKNKSFSAKDMSDNAVEFLSESVGTNTGLNSASLNKVIGTGGLSYNIGGRLRQSPNGVVSKTVVPGRFLNVEGNDRLAAIGGFVANAGSSSPNTSQIDYNMGDFIRELKFPFAVNRAFVQDNGKVVLRANVISGMSSKARMQMSGKNYQQRPSRTTSPAVNPEDSTKYAEELLNILTNFDSGNGKKLR.

A compositionally biased stretch (basic residues) spans 1 to 12 (NSRIAHVPKSKK). Disordered regions lie at residues 1–21 (NSRI…SPRF) and 291–317 (KARM…NPED). The segment covering 297 to 312 (SGKNYQQRPSRTTSPA) has biased composition (polar residues).

This is an uncharacterized protein from Lachancea kluyveri (strain ATCC 58438 / CBS 3082 / BCRC 21498 / NBRC 1685 / JCM 7257 / NCYC 543 / NRRL Y-12651) (Yeast).